A 141-amino-acid chain; its full sequence is Protein Turandot Z (141 aa).

Residues 1–23 form the signal peptide; it reads MYFAIRLSFVLAVLFCLTGNGNA.

This sequence belongs to the Turandot family.

The protein localises to the secreted. A humoral factor that may play a role in stress tolerance. The sequence is that of Protein Turandot Z from Drosophila yakuba (Fruit fly).